Consider the following 288-residue polypeptide: Intermediate transcription factor 3 small subunit (288 aa).

This sequence belongs to the orthopoxvirus OPG134 family. As to quaternary structure, heterodimer of a 45 kDa (A23R) and a 32 kDa (A8R) subunit to form the virus intermediate transcription factor (VITF)-3.

Acts with RNA polymerase to initiate transcription from intermediate gene promoters. This Homo sapiens (Human) protein is Intermediate transcription factor 3 small subunit (OPG134).